A 526-amino-acid chain; its full sequence is Non-reducing end alpha-L-arabinofuranosidase BoGH43A (526 aa).

The signal sequence occupies residues 1-20 (MRNALFLIFISLCSVCKSSA). Residue Asp34 is the Proton acceptor of the active site. The Proton donor role is filled by Glu189.

Belongs to the glycosyl hydrolase 43 family.

It is found in the periplasm. The catalysed reaction is Hydrolysis of terminal non-reducing alpha-L-arabinofuranoside residues in alpha-L-arabinosides.. Its pathway is glucan metabolism; xyloglucan degradation. Functionally, alpha-L-arabinofuranosidase involved in xyloglucan degradation by mediating the cleavage of terminal non-reducing alpha-L-arabinofuranoside residues in xyloglucan branches, converting the 'S' units to 'X' units. The chain is Non-reducing end alpha-L-arabinofuranosidase BoGH43A from Bacteroides ovatus (strain ATCC 8483 / DSM 1896 / JCM 5824 / BCRC 10623 / CCUG 4943 / NCTC 11153).